Here is a 424-residue protein sequence, read N- to C-terminus: Riboflavin biosynthesis protein RibBA (424 aa).

Positions 1–206 (MFTCEAGIAS…VDDLITYRYT (206 aa)) are DHBP synthase. Residues 32–33 (RE), Asp-37, 145–149 (RPGHT), and Glu-169 contribute to the D-ribulose 5-phosphate site. Mg(2+) is bound at residue Glu-33. His-148 contacts Mg(2+). The GTP cyclohydrolase II stretch occupies residues 207–424 (YDSLVTKISS…YETVERMSCR (218 aa)). 257 to 261 (RVHSE) is a binding site for GTP. Residues Cys-262, Cys-273, and Cys-275 each coordinate Zn(2+). GTP contacts are provided by residues Gln-278, 301 to 303 (EGR), and Thr-323. Asp-335 (proton acceptor; for GTP cyclohydrolase activity) is an active-site residue. The active-site Nucleophile; for GTP cyclohydrolase activity is the Arg-337. GTP is bound by residues Thr-358 and Lys-363.

This sequence in the N-terminal section; belongs to the DHBP synthase family. In the C-terminal section; belongs to the GTP cyclohydrolase II family. Mg(2+) serves as cofactor. It depends on Mn(2+) as a cofactor. The cofactor is Zn(2+).

It catalyses the reaction D-ribulose 5-phosphate = (2S)-2-hydroxy-3-oxobutyl phosphate + formate + H(+). The enzyme catalyses GTP + 4 H2O = 2,5-diamino-6-hydroxy-4-(5-phosphoribosylamino)-pyrimidine + formate + 2 phosphate + 3 H(+). It participates in cofactor biosynthesis; riboflavin biosynthesis; 2-hydroxy-3-oxobutyl phosphate from D-ribulose 5-phosphate: step 1/1. Its pathway is cofactor biosynthesis; riboflavin biosynthesis; 5-amino-6-(D-ribitylamino)uracil from GTP: step 1/4. Functionally, catalyzes the conversion of D-ribulose 5-phosphate to formate and 3,4-dihydroxy-2-butanone 4-phosphate. Its function is as follows. Catalyzes the conversion of GTP to 2,5-diamino-6-ribosylamino-4(3H)-pyrimidinone 5'-phosphate (DARP), formate and pyrophosphate. This is Riboflavin biosynthesis protein RibBA from Chlamydia trachomatis serovar D (strain ATCC VR-885 / DSM 19411 / UW-3/Cx).